Reading from the N-terminus, the 96-residue chain is Putative pterin-4-alpha-carbinolamine dehydratase (96 aa).

The protein belongs to the pterin-4-alpha-carbinolamine dehydratase family.

It catalyses the reaction (4aS,6R)-4a-hydroxy-L-erythro-5,6,7,8-tetrahydrobiopterin = (6R)-L-erythro-6,7-dihydrobiopterin + H2O. In Caulobacter sp. (strain K31), this protein is Putative pterin-4-alpha-carbinolamine dehydratase.